The following is a 368-amino-acid chain: 1-deoxy-D-xylulose 5-phosphate reductoisomerase (368 aa).

T10, G11, S12, I13, Q38, and N100 together coordinate NADPH. K101 contributes to the 1-deoxy-D-xylulose 5-phosphate binding site. Position 102 (E102) interacts with NADPH. D125 contacts Mn(2+). Positions 126, 127, 151, and 172 each coordinate 1-deoxy-D-xylulose 5-phosphate. E127 serves as a coordination point for Mn(2+). Position 178 (G178) interacts with NADPH. Positions 185, 190, 191, and 194 each coordinate 1-deoxy-D-xylulose 5-phosphate. Mn(2+) is bound at residue E194.

It belongs to the DXR family. It depends on Mg(2+) as a cofactor. Mn(2+) serves as cofactor.

The catalysed reaction is 2-C-methyl-D-erythritol 4-phosphate + NADP(+) = 1-deoxy-D-xylulose 5-phosphate + NADPH + H(+). It functions in the pathway isoprenoid biosynthesis; isopentenyl diphosphate biosynthesis via DXP pathway; isopentenyl diphosphate from 1-deoxy-D-xylulose 5-phosphate: step 1/6. Catalyzes the NADPH-dependent rearrangement and reduction of 1-deoxy-D-xylulose-5-phosphate (DXP) to 2-C-methyl-D-erythritol 4-phosphate (MEP). The polypeptide is 1-deoxy-D-xylulose 5-phosphate reductoisomerase (Tropheryma whipplei (strain Twist) (Whipple's bacillus)).